We begin with the raw amino-acid sequence, 201 residues long: Probable molybdenum cofactor guanylyltransferase (201 aa).

GTP contacts are provided by residues 6 to 8 (LAG), lysine 18, aspartate 65, and aspartate 97. Aspartate 97 is a binding site for Mg(2+).

This sequence belongs to the MobA family. Mg(2+) serves as cofactor.

The protein resides in the cytoplasm. The catalysed reaction is Mo-molybdopterin + GTP + H(+) = Mo-molybdopterin guanine dinucleotide + diphosphate. Transfers a GMP moiety from GTP to Mo-molybdopterin (Mo-MPT) cofactor (Moco or molybdenum cofactor) to form Mo-molybdopterin guanine dinucleotide (Mo-MGD) cofactor. This is Probable molybdenum cofactor guanylyltransferase from Staphylococcus haemolyticus (strain JCSC1435).